Here is a 430-residue protein sequence, read N- to C-terminus: Aspartate aminotransferase, mitochondrial (430 aa).

A mitochondrion-targeting transit peptide spans 1-29 (MALLHSGRVLPGIAAAFHPGLAAAASARA). T48 carries the phosphothreonine modification. An N6-acetyllysine modification is found at K59. G65 lines the substrate pocket. Position 73 is an N6-acetyllysine; alternate (K73). K73 carries the post-translational modification N6-succinyllysine; alternate. K82 is subject to N6-acetyllysine. The residue at position 90 (K90) is an N6-acetyllysine; alternate. At K90 the chain carries N6-succinyllysine; alternate. The residue at position 96 (Y96) is a 3'-nitrotyrosine; alternate. At Y96 the chain carries Phosphotyrosine; alternate. 2 positions are modified to N6-acetyllysine; alternate: K107 and K122. An N6-succinyllysine; alternate mark is found at K107 and K122. Residue S143 is modified to Phosphoserine. K159 is subject to N6-acetyllysine; alternate. K159 bears the N6-succinyllysine; alternate mark. Residue W162 coordinates substrate. Residue K185 is modified to N6-acetyllysine; alternate. An N6-succinyllysine; alternate modification is found at K185. N215 serves as a coordination point for substrate. At K227 the chain carries N6-succinyllysine. N6-acetyllysine is present on K234. An N6-acetyllysine; alternate mark is found at K279 and K296. At K279 the chain carries N6-(pyridoxal phosphate)lysine; alternate. K296 carries the N6-succinyllysine; alternate modification. At K302 the chain carries N6-acetyllysine. K309 is subject to N6-acetyllysine; alternate. K309 is modified (N6-succinyllysine; alternate). R313 is modified (asymmetric dimethylarginine). T333 is subject to Phosphothreonine. Position 338 is an N6-acetyllysine; alternate (K338). K338 carries the N6-succinyllysine; alternate modification. Residue K345 is modified to N6-acetyllysine. The residue at position 363 (K363) is an N6-acetyllysine; alternate. Residue K363 is modified to N6-succinyllysine; alternate. K364 and K387 each carry N6-acetyllysine. Residues K396 and K404 each carry the N6-acetyllysine; alternate modification. An N6-succinyllysine; alternate mark is found at K396 and K404. R407 contacts substrate.

This sequence belongs to the class-I pyridoxal-phosphate-dependent aminotransferase family. Homodimer. Pyridoxal 5'-phosphate is required as a cofactor.

It is found in the mitochondrion matrix. Its subcellular location is the cell membrane. The catalysed reaction is L-aspartate + 2-oxoglutarate = oxaloacetate + L-glutamate. It catalyses the reaction L-kynurenine + 2-oxoglutarate = kynurenate + L-glutamate + H2O. Functionally, catalyzes the irreversible transamination of the L-tryptophan metabolite L-kynurenine to form kynurenic acid (KA). As a member of the malate-aspartate shuttle, it has a key role in the intracellular NAD(H) redox balance. Is important for metabolite exchange between mitochondria and cytosol, and for amino acid metabolism. Facilitates cellular uptake of long-chain free fatty acids. In Homo sapiens (Human), this protein is Aspartate aminotransferase, mitochondrial.